Reading from the N-terminus, the 78-residue chain is Glycophorin-E (78 aa).

The signal sequence occupies residues 1-19; it reads MYGKIIFVLLLSGIVSISA. Residues 20–52 lie on the Extracellular side of the membrane; the sequence is SSTTGVAMHTSTSSSVTKSYISSQTNGITLINW. A helical transmembrane segment spans residues 53–73; it reads WAMARVIFEVMLVVVGMIILI. The Cytoplasmic segment spans residues 74–78; sequence SYCIR.

This sequence belongs to the glycophorin-A family. The N-terminal extracellular domain is heavily glycosylated on serine and threonine residues. Erythrocytes.

Its subcellular location is the membrane. Functionally, this protein is a minor sialoglycoprotein in human erythrocyte membranes. The sequence is that of Glycophorin-E (GYPE) from Homo sapiens (Human).